We begin with the raw amino-acid sequence, 254 residues long: MASLLKVDQEVKLKVDSFRERITSEAEDLVANFFPKKLLELDSFLKEPILNIHDLTQIHSDMNLPVPDPILLTNSHDGLDGPTYKKRRLDDCEEAFQGTKVFVMPNGMLKSNQQLVDIIEKVKPEIRLLIEKCNTVKMWVQLLIPRIEDGNNFGVSIQEETVAELRTVESEAASYLDQISRYYITRAKLVSKIAKYPHVEDYRRTVTEIDEKEYISLRLIISELRNQYVTLHDMILKNIEKIKRPRSSNAETLY.

Position 2 is an N-acetylalanine (alanine 2). Residues serine 17 and serine 24 each carry the phosphoserine modification. Lysine 195 carries the post-translational modification N6-acetyllysine; by P300/CBP. Residue serine 247 is modified to Phosphoserine; by CHEK2.

The protein belongs to the PA28 family. In terms of assembly, homoheptamer; the stability of the heptamer is essential for the specific activation of the trypsine-like subunit and inhibition of the chymotrypsin-like and postglutamyl-preferring (PGPH) subunits of the proteasome. Interacts with p53/TP53, MDM2 and MAP3K3. Associates with the proteasome. Interacts with CCAR2. Interacts with PSME3IP1 (via C-terminus); the interaction is direct and promotes the association of PSME3 with the 20S proteasome. Interacts with COIL; the interaction is inhibited by PSME3IP1. Post-translationally, phosphorylated by MAP3K3. Phosphorylation at Ser-247 promotes its association with CCAR2. In terms of processing, acetylation at the major site Lys-195 is important for oligomerization and ability to degrade its target substrates. Deacetylated by SIRT1.

It is found in the nucleus. Its subcellular location is the cytoplasm. Functionally, subunit of the 11S REG-gamma (also called PA28-gamma) proteasome regulator, a doughnut-shaped homoheptamer which associates with the proteasome. 11S REG-gamma activates the trypsin-like catalytic subunit of the proteasome but inhibits the chymotrypsin-like and postglutamyl-preferring (PGPH) subunits. Facilitates the MDM2-p53/TP53 interaction which promotes ubiquitination- and MDM2-dependent proteasomal degradation of p53/TP53, limiting its accumulation and resulting in inhibited apoptosis after DNA damage. May also be involved in cell cycle regulation. Mediates CCAR2 and CHEK2-dependent SIRT1 inhibition. This is Proteasome activator complex subunit 3 (PSME3) from Pongo abelii (Sumatran orangutan).